Reading from the N-terminus, the 757-residue chain is MDVNPTLLFLKVPAQNAISTTFPYTGDPPYSHGTGTGYTMDTVNRTHQYSEKGKWTTNTETGAPQLNPIDGPLPENHEPSGYAQTDCVLEAMAFLEESHPGIFENSCLETMEVVQQTRVDKLTQGRQTYDWTLNRNQPAATALANTIEVFRSNDLTANESGRLIDFLKDVMESMDKEEMEITTHFQRKRRIRDNMTKKMVTQRTIGKKKQRLNKKSYLIRALTLNTMTKDAERGKLKRRAIATPGMQIRGFVYFVETLARSICEKLEQSGLPVGGNEKKAKLANVVRKMMTNSQDTELSFTITGDNTKWNENQNPRMFLAMITYITRNQPDWFRNVLSIAPIMFSNKMARLGKGYMFESKSMKLRTQIPAEMLANIDLKYFNESTRKKIEKIRPLLIDGTASLSPGMMMGMFNMLSTVLGVSILNLGQKRYTKTTYWWDGLQSSDDFALIVNAPNHEGIQAGVDRFYRTCKLVGINMSKKKSYINRTGTFEFTSFFYRYGFVANFSMELPSFGVSGINESADMSIGVTVIKNNMINNDLGPATAQMALQLFIKDYRYTYRCHRGDTQIQTRRSFELKKLWEQTRSKAGLLVSDGGPNLYNIRNLHIPEVCLKWELMDEDYQGRLCNPLNPFVSHKEIESVNNAVVMPAHGPAKSMEYDAVATTHSWIPKRNRSILNTSQRGILEDEQMYQKCCNLFEKFFPSSSYRRPVGISSMVEAMVSRARIDARIDFESGRIKKEEFAEIMKICSTIEELRRQK.

The segment at 50 to 81 (SEKGKWTTNTETGAPQLNPIDGPLPENHEPSG) is disordered. Over residues 55–64 (WTTNTETGAP) the composition is skewed to polar residues. 2 consecutive short sequence motifs (nuclear localization signal) follow at residues 187-195 (RKRRIRDNM) and 203-216 (RTIGKKKQRLNKKS). Residues 249–256 (RGFVYFVE) are promoter-binding site. In terms of domain architecture, RdRp catalytic spans 286–483 (VRKMMTNSQD…GINMSKKKSY (198 aa)).

Belongs to the influenza viruses polymerase PB1 family. Influenza RNA polymerase is composed of three subunits: PB1, PB2 and PA. Interacts (via N-terminus) with PA (via C-terminus). Interacts (via C-terminus) with PB2 (via N-terminus); this interaction is essential for transcription initiation. Phosphorylated by host PRKCA.

It localises to the host nucleus. The protein resides in the host cytoplasm. The enzyme catalyses RNA(n) + a ribonucleoside 5'-triphosphate = RNA(n+1) + diphosphate. In terms of biological role, RNA-dependent RNA polymerase which is responsible for replication and transcription of virus RNA segments. The transcription of viral mRNAs occurs by a unique mechanism called cap-snatching. 5' methylated caps of cellular mRNAs are cleaved after 10-13 nucleotides by PA. In turn, these short capped RNAs are used as primers by PB1 for transcription of viral mRNAs. During virus replication, PB1 initiates RNA synthesis and copy vRNA into complementary RNA (cRNA) which in turn serves as a template for the production of more vRNAs. This chain is RNA-directed RNA polymerase catalytic subunit, found in Aves (Cat).